The primary structure comprises 96 residues: Small ribosomal subunit protein bS18c (96 aa).

This sequence belongs to the bacterial ribosomal protein bS18 family. As to quaternary structure, part of the 30S ribosomal subunit.

The protein localises to the plastid. Its subcellular location is the chloroplast. The protein is Small ribosomal subunit protein bS18c (rps18) of Pinus thunbergii (Japanese black pine).